The sequence spans 178 residues: uncharacterized protein (178 aa).

Disordered regions lie at residues asparagine 89 to isoleucine 115 and aspartate 136 to alanine 178. The segment covering alanine 98–threonine 109 has biased composition (low complexity). Positions aspartate 167–alanine 178 are enriched in acidic residues.

The protein localises to the cytoplasm. It is found in the nucleus. This is an uncharacterized protein from Schizosaccharomyces pombe (strain 972 / ATCC 24843) (Fission yeast).